The chain runs to 800 residues: MLISNEWLKDYVNVDQSVQALAERITRTGIEVDDIIDYTKDIKKLVVGHVLSKTPHPNADKLNICQVDLGEEEPVQIVCGAPNVDEGQHVIVAKVGGRLPGGVKIKRAKLRGERSEGMICSLQEIGISSHVTPKNYESGIYVFPEAVKPGTDALEALYLNDQVMEFDLTPNRADALSMIGTAYEVAALYQTKMNKPQLTSNESQESAKDELTIEVKNEDKVPYYSARVVHDVTIGPSPVWMQFRLIKAGIRPINNVVDISNYVLLEYGQPLHMFDQEQIGSQSIEVRQAKKDETMRTLDGEERRLLDTDIVITNGKDPIALGGVMGGDFSEVTEQTRHVVVEGAIFDPVSIRHTSRRLNLRSESSSRFEKGIATEFVDEAVDRACYLLETYASATVLKDRISYGDLGSFVTPIKITADKVNRTIGFNLTDEEIIDIFEQLGFKTENKNGDIIVNVPSRRKDISIKEDLIEEVARIYGYDDIPSTLPVFKDVTSGELTDRQFKTRTVKETLEGAGLDQAITYSLVSKNHATDFALQNRSTIELLMPMSEAHSTLRQSLLPHLIDAVSYNVARKNTNVKLYEIGRVFFGNGEGELPDEVEYLSGILTGDFVNNKWQGKKEPVDFYLTKGIVERVAEKLNLQFDFRAGQIDGLHPGRTAIVSLNGKDIGFIGELHPTLAANNDLKRTYVFELNYDAMMEVSVGYINYEPIPRFPGVTRDIALEVNHEVTSSELLSIIHENGEDILNDTLVFDVYEGEHLEKGKKSIAIRLSYLDTENTLTDERVNAVHDKILEALKKHGAIIR.

In terms of domain architecture, tRNA-binding spans 39 to 154 (TKDIKKLVVG…EAVKPGTDAL (116 aa)). Positions 408–483 (SFVTPIKITA…RIYGYDDIPS (76 aa)) constitute a B5 domain. Mg(2+) is bound by residues aspartate 461, aspartate 467, glutamate 470, and glutamate 471. The FDX-ACB domain maps to 708–800 (PRFPGVTRDI…ALKKHGAIIR (93 aa)).

This sequence belongs to the phenylalanyl-tRNA synthetase beta subunit family. Type 1 subfamily. In terms of assembly, tetramer of two alpha and two beta subunits. It depends on Mg(2+) as a cofactor.

It localises to the cytoplasm. It catalyses the reaction tRNA(Phe) + L-phenylalanine + ATP = L-phenylalanyl-tRNA(Phe) + AMP + diphosphate + H(+). This Staphylococcus epidermidis (strain ATCC 35984 / DSM 28319 / BCRC 17069 / CCUG 31568 / BM 3577 / RP62A) protein is Phenylalanine--tRNA ligase beta subunit.